A 158-amino-acid polypeptide reads, in one-letter code: uncharacterized protein (158 aa).

Positions 13–110 constitute an HTH hxlR-type domain; sequence ESVGRALELV…WGDEYLPRPE (98 aa).

This is an uncharacterized protein from Mycobacterium tuberculosis (strain CDC 1551 / Oshkosh).